The primary structure comprises 132 residues: Small ribosomal subunit protein uS9 (132 aa).

The disordered stretch occupies residues 103–132; that stretch reads NGLLTRDDRTKERKKPGLKRARKAPQYTKR. Residues 114–132 are compositionally biased toward basic residues; the sequence is ERKKPGLKRARKAPQYTKR.

The protein belongs to the universal ribosomal protein uS9 family.

This Dehalococcoides mccartyi (strain CBDB1) protein is Small ribosomal subunit protein uS9.